A 256-amino-acid polypeptide reads, in one-letter code: Thiazole synthase (256 aa).

Lysine 95 (schiff-base intermediate with DXP) is an active-site residue. 1-deoxy-D-xylulose 5-phosphate-binding positions include glycine 156, 182–183 (AG), and 204–205 (NT).

The protein belongs to the ThiG family. Homotetramer. Forms heterodimers with either ThiH or ThiS.

It is found in the cytoplasm. It carries out the reaction [ThiS sulfur-carrier protein]-C-terminal-Gly-aminoethanethioate + 2-iminoacetate + 1-deoxy-D-xylulose 5-phosphate = [ThiS sulfur-carrier protein]-C-terminal Gly-Gly + 2-[(2R,5Z)-2-carboxy-4-methylthiazol-5(2H)-ylidene]ethyl phosphate + 2 H2O + H(+). It participates in cofactor biosynthesis; thiamine diphosphate biosynthesis. In terms of biological role, catalyzes the rearrangement of 1-deoxy-D-xylulose 5-phosphate (DXP) to produce the thiazole phosphate moiety of thiamine. Sulfur is provided by the thiocarboxylate moiety of the carrier protein ThiS. In vitro, sulfur can be provided by H(2)S. In Photobacterium profundum (strain SS9), this protein is Thiazole synthase.